Here is a 290-residue protein sequence, read N- to C-terminus: NAD kinase (290 aa).

D75 serves as the catalytic Proton acceptor. NAD(+)-binding positions include 75 to 76, 148 to 149, D178, 189 to 194, and Q247; these read DG, NE, and TAYNIS.

It belongs to the NAD kinase family. It depends on a divalent metal cation as a cofactor.

The protein localises to the cytoplasm. It carries out the reaction NAD(+) + ATP = ADP + NADP(+) + H(+). Its function is as follows. Involved in the regulation of the intracellular balance of NAD and NADP, and is a key enzyme in the biosynthesis of NADP. Catalyzes specifically the phosphorylation on 2'-hydroxyl of the adenosine moiety of NAD to yield NADP. In Wolinella succinogenes (strain ATCC 29543 / DSM 1740 / CCUG 13145 / JCM 31913 / LMG 7466 / NCTC 11488 / FDC 602W) (Vibrio succinogenes), this protein is NAD kinase.